Consider the following 617-residue polypeptide: Proline--tRNA ligase (617 aa).

It belongs to the class-II aminoacyl-tRNA synthetase family. ProS type 1 subfamily. In terms of assembly, homodimer.

The protein localises to the cytoplasm. The catalysed reaction is tRNA(Pro) + L-proline + ATP = L-prolyl-tRNA(Pro) + AMP + diphosphate. Its function is as follows. Catalyzes the attachment of proline to tRNA(Pro) in a two-step reaction: proline is first activated by ATP to form Pro-AMP and then transferred to the acceptor end of tRNA(Pro). As ProRS can inadvertently accommodate and process non-cognate amino acids such as alanine and cysteine, to avoid such errors it has two additional distinct editing activities against alanine. One activity is designated as 'pretransfer' editing and involves the tRNA(Pro)-independent hydrolysis of activated Ala-AMP. The other activity is designated 'posttransfer' editing and involves deacylation of mischarged Ala-tRNA(Pro). The misacylated Cys-tRNA(Pro) is not edited by ProRS. The sequence is that of Proline--tRNA ligase from Streptococcus agalactiae serotype Ia (strain ATCC 27591 / A909 / CDC SS700).